The sequence spans 181 residues: Transcriptional repressor NrdR (181 aa).

A zinc finger spans residues 3-34 (CLFCQHTYTRVIDSRVSEDGATIRRRRECEAC). An ATP-cone domain is found at 49–139 (PVIIKKDGGR…VYRSFQDVAD (91 aa)).

Belongs to the NrdR family. Zn(2+) serves as cofactor.

Its function is as follows. Negatively regulates transcription of bacterial ribonucleotide reductase nrd genes and operons by binding to NrdR-boxes. The polypeptide is Transcriptional repressor NrdR (Xylella fastidiosa (strain 9a5c)).